The chain runs to 91 residues: MIIKCSNDELDIVQKIQANIFCKENTKKLLDMRSSNLVPLTRIDFESFDSHLINLSNGIYALGMTHMLCFTKTVSKVNSIINSLVTLEEAA.

This is an uncharacterized protein from Rickettsia prowazekii (strain Madrid E).